Here is a 298-residue protein sequence, read N- to C-terminus: Protoheme IX farnesyltransferase 1 (298 aa).

Helical transmembrane passes span 21 to 41, 43 to 63, 94 to 114, 118 to 138, 144 to 164, 168 to 188, 215 to 235, 236 to 256, and 274 to 294; these read QVWW…INSF, SYLI…SMGA, KGAF…LLIF, LAAL…SYLL, YSII…WYTV, FSWI…VHVW, TAVS…IPYF, LGFF…PIVI, and FIYT…IHII.

The protein belongs to the UbiA prenyltransferase family. Protoheme IX farnesyltransferase subfamily.

The protein resides in the cell membrane. The enzyme catalyses heme b + (2E,6E)-farnesyl diphosphate + H2O = Fe(II)-heme o + diphosphate. The protein operates within porphyrin-containing compound metabolism; heme O biosynthesis; heme O from protoheme: step 1/1. Converts heme B (protoheme IX) to heme O by substitution of the vinyl group on carbon 2 of heme B porphyrin ring with a hydroxyethyl farnesyl side group. In Picrophilus torridus (strain ATCC 700027 / DSM 9790 / JCM 10055 / NBRC 100828 / KAW 2/3), this protein is Protoheme IX farnesyltransferase 1.